A 264-amino-acid chain; its full sequence is H-2 class II histocompatibility antigen, E-Q beta chain (264 aa).

An N-terminal signal peptide occupies residues 1-26; it reads MVWLPRVPCVAAVILLLTVLSPPVAL. The tract at residues 27-121 is beta-1; sequence VRDSRPWFLE…IFDNFLVRRR (95 aa). The Extracellular portion of the chain corresponds to 27–225; it reads VRDSRPWFLE…KAQSTSAQNK (199 aa). Cystine bridges form between C38–C106 and C144–C200. Residue N46 is glycosylated (N-linked (GlcNAc...) asparagine). The segment at 122 to 225 is beta-2; the sequence is VEPTVTVYPT…KAQSTSAQNK (104 aa). In terms of domain architecture, Ig-like C1-type spans 124 to 214; it reads PTVTVYPTKT…PSLTDPVTVE (91 aa). A helical transmembrane segment spans residues 226-246; sequence MLSGVGGFVLGLLFLGAGLFI. Topologically, residues 247-264 are cytoplasmic; the sequence is YFRNQKGQSGLQPTGLLS.

Belongs to the MHC class II family.

It is found in the membrane. The chain is H-2 class II histocompatibility antigen, E-Q beta chain from Mus musculus (Mouse).